The following is a 72-amino-acid chain: Male-specific sperm protein Mst84Dd (72 aa).

This sequence belongs to the MST(3)CGP family. Testis.

In Drosophila melanogaster (Fruit fly), this protein is Male-specific sperm protein Mst84Dd (Mst84Dd).